Here is a 617-residue protein sequence, read N- to C-terminus: ATP-dependent RNA helicase DBP1 (617 aa).

Residues 1 to 90 (MADLPQKVSN…TSANYNRGGS (90 aa)) form a disordered region. Residues 7–17 (KVSNLSINNKE) are compositionally biased toward polar residues. Basic and acidic residues predominate over residues 38-58 (PSFERSTPKQEDKVTGGDFFR). Over residues 79–90 (GGTSANYNRGGS) the composition is skewed to polar residues. A Q motif motif is present at residues 154-182 (LDFSSPPLDELLMENIKLASFTKPTPVQK). The 190-residue stretch at 185–374 (IPIVTKGRDL…RDFLDNYIFL (190 aa)) folds into the Helicase ATP-binding domain. 198 to 205 (AQTGSGKT) is an ATP binding site. A DEAD box motif is present at residues 318-321 (DEAD). A Helicase C-terminal domain is found at 385–545 (NITQRILYVD…EVPTFLSDLS (161 aa)). Residues 542–617 (SDLSRQNSRG…GYGNSNASWW (76 aa)) are disordered. The segment covering 580 to 594 (FGSTRPRNTGTSNWG) has biased composition (polar residues).

It belongs to the DEAD box helicase family. DDX3/DED1 subfamily.

It is found in the cytoplasm. It catalyses the reaction ATP + H2O = ADP + phosphate + H(+). ATP-binding RNA helicase involved in translation initiation. Remodels RNA in response to ADP and ATP concentrations by facilitating disruption, but also formation of RNA duplexes. Redundant to DED1, may be required in conditions in which DED1 expression is decreased. This chain is ATP-dependent RNA helicase DBP1 (DBP1), found in Saccharomyces cerevisiae (strain YJM789) (Baker's yeast).